A 227-amino-acid chain; its full sequence is Translation initiation factor 6 (227 aa).

This sequence belongs to the eIF-6 family.

Binds to the 50S ribosomal subunit and prevents its association with the 30S ribosomal subunit to form the 70S initiation complex. This is Translation initiation factor 6 from Methanococcus maripaludis (strain DSM 14266 / JCM 13030 / NBRC 101832 / S2 / LL).